We begin with the raw amino-acid sequence, 220 residues long: MELYLDTANVAEVERLARIFPIAGVTTNPSIVAASKESIWDVLPRLQNAIGEEGTLFAQTMSRDAKGMVEEAKRLNNAIPGIVVKIPVTAEGLAAIKLLKKEGIVTLGTAVYSASQGLLAALAGAKYVAPYVNRVDAQGGDGIRMVQELQTLLEHHAPDSMVLAASFKTPRQALDCLLAGCQAITLPLDVAQQMLNTPAVESAIEKFEQDWKNAFGNLNL.

The Schiff-base intermediate with substrate role is filled by lysine 85.

This sequence belongs to the transaldolase family. Type 3A subfamily. Homodecamer.

Its subcellular location is the cytoplasm. The enzyme catalyses beta-D-fructose 6-phosphate = dihydroxyacetone + D-glyceraldehyde 3-phosphate. Its function is as follows. Catalyzes the reversible formation of fructose 6-phosphate from dihydroxyacetone and D-glyceraldehyde 3-phosphate via an aldolization reaction. The protein is Fructose-6-phosphate aldolase of Salmonella choleraesuis (strain SC-B67).